The primary structure comprises 402 residues: Proline-rich protein 25 (402 aa).

Disordered stretches follow at residues 1–29 (MART…AAAH), 109–255 (TVPG…MVGS), and 337–371 (EAAQ…CPGR). Residues 345-355 (RRTAPPRRTAS) show a composition bias toward low complexity. Positions 356-367 (PEPPAPGAPLPA) are enriched in pro residues.

This is Proline-rich protein 25 (PRR25) from Homo sapiens (Human).